The primary structure comprises 262 residues: MWNLAGKELSSRLLLGTACYPSLEHMQQAILNSGTEVITISIKRQTSAGLDGESFWQAVKKLDCHFLPNTAGCRNAEAAINTAEIARELFDTHWIKLEVIGDDYNLQPEPFELIKATRILIDRGFEVFPYCTDDLVLCQKLVDAGCKILMPWGAPIGSGKGLINPYALETLRYRFPDITLIIDAGIGKPSHAVQAMEFGFDGVLLNTAVALANHPALMATAFRHAVIAGHQAFTGGMMSERNVAHPSTPLIDTPFWHQVNNL.

The active-site Schiff-base intermediate with DXP is K96. Residues G157, 184 to 185, and 206 to 207 each bind 1-deoxy-D-xylulose 5-phosphate; these read AG and NT.

The protein belongs to the ThiG family. Homotetramer. Forms heterodimers with either ThiH or ThiS.

The protein resides in the cytoplasm. The catalysed reaction is [ThiS sulfur-carrier protein]-C-terminal-Gly-aminoethanethioate + 2-iminoacetate + 1-deoxy-D-xylulose 5-phosphate = [ThiS sulfur-carrier protein]-C-terminal Gly-Gly + 2-[(2R,5Z)-2-carboxy-4-methylthiazol-5(2H)-ylidene]ethyl phosphate + 2 H2O + H(+). It functions in the pathway cofactor biosynthesis; thiamine diphosphate biosynthesis. Catalyzes the rearrangement of 1-deoxy-D-xylulose 5-phosphate (DXP) to produce the thiazole phosphate moiety of thiamine. Sulfur is provided by the thiocarboxylate moiety of the carrier protein ThiS. In vitro, sulfur can be provided by H(2)S. The sequence is that of Thiazole synthase from Legionella pneumophila (strain Paris).